Here is a 243-residue protein sequence, read N- to C-terminus: HTH-type transcriptional regulator MlrA (243 aa).

The HTH merR-type domain occupies 3–72 (LYTIGEVALL…VSKVKMLLSN (70 aa)). The H-T-H motif DNA-binding region spans 6-25 (IGEVALLCDINPVTLRAWQR).

In terms of assembly, interacts with DgcM and PdeR.

Activity is regulated by DgcM and PdeR. Functionally, activates transcription of csgD, the master regulator of biofilm formation, by binding to its promoter region. Also controls the transcription of cadC and ibaG. Part of a signaling cascade that regulates curli biosynthesis. The cascade is composed of two c-di-GMP control modules, in which c-di-GMP controlled by the DgcE/PdeH pair (module I) regulates the activity of the DgcM/PdeR pair (module II), which in turn regulates activity of the transcription factor MlrA. This chain is HTH-type transcriptional regulator MlrA, found in Escherichia coli (strain K12).